Consider the following 347-residue polypeptide: D-alanine--D-alanine ligase (347 aa).

Residues 131–333 form the ATP-grasp domain; sequence KRVLESAGIA…YPELIERLVD (203 aa). An ATP-binding site is contributed by 161–216; sequence EEKLAYPVFAKPSNMGSSVGISKSENQEELRQALKLAFRYDSRVLVEQGVNAREIE. Mg(2+)-binding residues include Asp-287, Glu-300, and Asn-302.

Belongs to the D-alanine--D-alanine ligase family. Mg(2+) is required as a cofactor. Requires Mn(2+) as cofactor.

It localises to the cytoplasm. The enzyme catalyses 2 D-alanine + ATP = D-alanyl-D-alanine + ADP + phosphate + H(+). The protein operates within cell wall biogenesis; peptidoglycan biosynthesis. Cell wall formation. In Streptococcus pneumoniae (strain P1031), this protein is D-alanine--D-alanine ligase.